The chain runs to 395 residues: Flap endonuclease 1 (395 aa).

The segment at 1–104 (MGIKHLFQVI…GELAKRTARK (104 aa)) is N-domain. Aspartate 34 is a Mg(2+) binding site. Arginine 47 and arginine 70 together coordinate DNA. Mg(2+) contacts are provided by aspartate 86, glutamate 158, glutamate 160, aspartate 179, and aspartate 181. Positions 122-253 (EIEKFSRRTV…NTALKLIREH (132 aa)) are I-domain. Glutamate 158 contributes to the DNA binding site. DNA contacts are provided by glycine 231 and aspartate 233. Position 233 (aspartate 233) interacts with Mg(2+). The tract at residues 341-349 (QQSRLEGFF) is interaction with PCNA. Positions 356 to 389 (DAEKASLKRKHDEKLQEQKKRKKEEAKAKKEAKA) are enriched in basic and acidic residues. Residues 356-395 (DAEKASLKRKHDEKLQEQKKRKKEEAKAKKEAKAKPRGAA) are disordered.

It belongs to the XPG/RAD2 endonuclease family. FEN1 subfamily. Interacts with PCNA. Three molecules of fen1 bind to one PCNA trimer with each molecule binding to one PCNA monomer. PCNA stimulates the nuclease activity without altering cleavage specificity. Mg(2+) serves as cofactor. Post-translationally, phosphorylated. Phosphorylation upon DNA damage induces relocalization to the nuclear plasma.

Its subcellular location is the nucleus. It is found in the nucleolus. The protein localises to the nucleoplasm. It localises to the mitochondrion. In terms of biological role, structure-specific nuclease with 5'-flap endonuclease and 5'-3' exonuclease activities involved in DNA replication and repair. During DNA replication, cleaves the 5'-overhanging flap structure that is generated by displacement synthesis when DNA polymerase encounters the 5'-end of a downstream Okazaki fragment. It enters the flap from the 5'-end and then tracks to cleave the flap base, leaving a nick for ligation. Also involved in the long patch base excision repair (LP-BER) pathway, by cleaving within the apurinic/apyrimidinic (AP) site-terminated flap. Acts as a genome stabilization factor that prevents flaps from equilibrating into structures that lead to duplications and deletions. Also possesses 5'-3' exonuclease activity on nicked or gapped double-stranded DNA, and exhibits RNase H activity. Also involved in replication and repair of rDNA and in repairing mitochondrial DNA. The polypeptide is Flap endonuclease 1 (fen1) (Aspergillus clavatus (strain ATCC 1007 / CBS 513.65 / DSM 816 / NCTC 3887 / NRRL 1 / QM 1276 / 107)).